A 208-amino-acid chain; its full sequence is Small ribosomal subunit protein uS4 (208 aa).

Residues 99–165 (RRLDNVVFQL…PRLKEILSSL (67 aa)) enclose the S4 RNA-binding domain.

This sequence belongs to the universal ribosomal protein uS4 family. As to quaternary structure, part of the 30S ribosomal subunit. Contacts protein S5. The interaction surface between S4 and S5 is involved in control of translational fidelity.

One of the primary rRNA binding proteins, it binds directly to 16S rRNA where it nucleates assembly of the body of the 30S subunit. Its function is as follows. With S5 and S12 plays an important role in translational accuracy. The sequence is that of Small ribosomal subunit protein uS4 from Desulfitobacterium hafniense (strain Y51).